The sequence spans 304 residues: Splicing factor U2af small subunit B (304 aa).

A C3H1-type 1 zinc finger spans residues 12–40 (EKDRVNCPFYFKIGACRHGDRCSRLHNRP). One can recognise an RRM domain in the interval 44–146 (PTIVLANMYQ…RPIIVEYSPV (103 aa)). A C3H1-type 2 zinc finger spans residues 148-175 (DFREATCRQFEENSCNRGGYCNFMHVKQ). A compositionally biased stretch (basic residues) spans 184-207 (LYGGRSRRSHGRSRSPSPRHRRGN). The interval 184 to 304 (LYGGRSRRSH…QWNREREEKP (121 aa)) is disordered. Residues 208-220 (RDRDDFRRERDGY) show a composition bias toward basic and acidic residues. Positions 221–258 (RGGGDGYRGGGGGGGGDGYRGGDSYRGGGGGGRRGGGS) are enriched in gly residues. Residues 268-280 (RRRHGSPPRRARS) are compositionally biased toward basic residues. Basic and acidic residues predominate over residues 281 to 304 (PVRESSEERRAKIEQWNREREEKP).

It belongs to the splicing factor SR family.

The protein localises to the nucleus. In terms of biological role, necessary for the splicing of pre-mRNA. The protein is Splicing factor U2af small subunit B (U2AF35B) of Oryza sativa subsp. japonica (Rice).